We begin with the raw amino-acid sequence, 227 residues long: Uridylate kinase (227 aa).

ATP is bound at residue 6–10 (KVSGK). Position 43 (G43) interacts with UMP. Residues G44 and R48 each contribute to the ATP site. Residues D65 and 113–119 (FQPGQST) each bind UMP. T139, N140, Y145, and D148 together coordinate ATP.

The protein belongs to the UMP kinase family. Homohexamer.

It is found in the cytoplasm. It catalyses the reaction UMP + ATP = UDP + ADP. Its pathway is pyrimidine metabolism; CTP biosynthesis via de novo pathway; UDP from UMP (UMPK route): step 1/1. With respect to regulation, inhibited by UTP. Catalyzes the reversible phosphorylation of UMP to UDP. The protein is Uridylate kinase of Sulfolobus acidocaldarius (strain ATCC 33909 / DSM 639 / JCM 8929 / NBRC 15157 / NCIMB 11770).